We begin with the raw amino-acid sequence, 211 residues long: Molybdenum cofactor guanylyltransferase (211 aa).

Residues 12–14, Lys-25, Asn-53, Asp-71, and Asp-101 contribute to the GTP site; that span reads LAG. Residue Asp-101 participates in Mg(2+) binding.

It belongs to the MobA family. Monomer. Requires Mg(2+) as cofactor.

Its subcellular location is the cytoplasm. The enzyme catalyses Mo-molybdopterin + GTP + H(+) = Mo-molybdopterin guanine dinucleotide + diphosphate. In terms of biological role, transfers a GMP moiety from GTP to Mo-molybdopterin (Mo-MPT) cofactor (Moco or molybdenum cofactor) to form Mo-molybdopterin guanine dinucleotide (Mo-MGD) cofactor. This chain is Molybdenum cofactor guanylyltransferase, found in Acidovorax sp. (strain JS42).